Reading from the N-terminus, the 145-residue chain is D-aminoacyl-tRNA deacylase (145 aa).

The short motif at 137 to 138 (GP) is the Gly-cisPro motif, important for rejection of L-amino acids element.

Belongs to the DTD family. In terms of assembly, homodimer.

The protein localises to the cytoplasm. The enzyme catalyses glycyl-tRNA(Ala) + H2O = tRNA(Ala) + glycine + H(+). It catalyses the reaction a D-aminoacyl-tRNA + H2O = a tRNA + a D-alpha-amino acid + H(+). Functionally, an aminoacyl-tRNA editing enzyme that deacylates mischarged D-aminoacyl-tRNAs. Also deacylates mischarged glycyl-tRNA(Ala), protecting cells against glycine mischarging by AlaRS. Acts via tRNA-based rather than protein-based catalysis; rejects L-amino acids rather than detecting D-amino acids in the active site. By recycling D-aminoacyl-tRNA to D-amino acids and free tRNA molecules, this enzyme counteracts the toxicity associated with the formation of D-aminoacyl-tRNA entities in vivo and helps enforce protein L-homochirality. The sequence is that of D-aminoacyl-tRNA deacylase from Pseudomonas syringae pv. syringae (strain B728a).